The primary structure comprises 442 residues: Trigger factor (442 aa).

In terms of domain architecture, PPIase FKBP-type spans 165 to 250; it reads DDTAQIDFEG…LHKILQKELP (86 aa).

It belongs to the FKBP-type PPIase family. Tig subfamily.

Its subcellular location is the cytoplasm. It catalyses the reaction [protein]-peptidylproline (omega=180) = [protein]-peptidylproline (omega=0). Functionally, involved in protein export. Acts as a chaperone by maintaining the newly synthesized protein in an open conformation. Functions as a peptidyl-prolyl cis-trans isomerase. The sequence is that of Trigger factor from Helicobacter hepaticus (strain ATCC 51449 / 3B1).